A 524-amino-acid polypeptide reads, in one-letter code: 3-epi-6-deoxocathasterone 23-monooxygenase CYP90C1 (524 aa).

Residues 25-45 (YLVAGFLVLTAGILLRPWLWL) traverse the membrane as a helical segment. A heme-binding site is contributed by Cys463.

It belongs to the cytochrome P450 family. Requires heme as cofactor. As to expression, widely expressed.

Its subcellular location is the endoplasmic reticulum membrane. It carries out the reaction 3-epi-6-deoxocathasterone + reduced [NADPH--hemoprotein reductase] + O2 = 6-deoxotyphasterol + oxidized [NADPH--hemoprotein reductase] + H2O + H(+). The catalysed reaction is (22S,24R)-22-hydroxy-5alpha-ergostan-3-one + reduced [NADPH--hemoprotein reductase] + O2 = 3-dehydro-6-deoxoteasterone + oxidized [NADPH--hemoprotein reductase] + H2O + H(+). It participates in plant hormone biosynthesis; brassinosteroid biosynthesis. Involved in brassinosteroid (BR) biosynthesis. Converts typhasterol (TY) to cathasterone (CS) and 6-deoxotyphasterol (6-deoxoTY) to 6-deoxocathasterone (6-deoxoCT). C-23 hydroxylase that converts directly (22S,24R)-22-hydroxy-5-alpha-ergostan-3-one and 3-epi-6-deoxocathasterone to 3-dehydro-6-deoxoteasterone (6-deoxo3DT, 6-deoxo3DHT) and 6-deoxotyphasterol (6-deoxoTY), respectively. These C-23 hydroxylation shortcuts bypass campestanol, 6-deoxocathasterone, and 6-deoxoteasterone (6-deoxoTE). Also catalyzes the conversion of cathasterone to teasterone (TE), (22S,24R)-22-hydroxyergost-4-en-3-one (22-OH-4-en-3-one) to (22R,23R)-22,23-dihydroxy-campest-4-en-3-one (22,23-diOH-4-en-3-one) and (22S)-22-hydroxycampesterol (22-OHCR) to (22R,23R)-22,23-dihydroxycampesterol (22,23-diOHCR). Required for the regulation of polar elongation of leaf cells. Required for the longitudinal elongation of floral organs. In Arabidopsis thaliana (Mouse-ear cress), this protein is 3-epi-6-deoxocathasterone 23-monooxygenase CYP90C1.